Here is a 215-residue protein sequence, read N- to C-terminus: Probable nicotinate-nucleotide adenylyltransferase (215 aa).

This sequence belongs to the NadD family.

It carries out the reaction nicotinate beta-D-ribonucleotide + ATP + H(+) = deamido-NAD(+) + diphosphate. Its pathway is cofactor biosynthesis; NAD(+) biosynthesis; deamido-NAD(+) from nicotinate D-ribonucleotide: step 1/1. Its function is as follows. Catalyzes the reversible adenylation of nicotinate mononucleotide (NaMN) to nicotinic acid adenine dinucleotide (NaAD). In Coxiella burnetii (strain Dugway 5J108-111), this protein is Probable nicotinate-nucleotide adenylyltransferase.